Consider the following 371-residue polypeptide: Ferrochelatase (371 aa).

Fe cation is bound by residues H218 and E299.

The protein belongs to the ferrochelatase family.

It localises to the cytoplasm. It carries out the reaction heme b + 2 H(+) = protoporphyrin IX + Fe(2+). Its pathway is porphyrin-containing compound metabolism; protoheme biosynthesis; protoheme from protoporphyrin-IX: step 1/1. In terms of biological role, catalyzes the ferrous insertion into protoporphyrin IX. This chain is Ferrochelatase, found in Cupriavidus necator (strain ATCC 17699 / DSM 428 / KCTC 22496 / NCIMB 10442 / H16 / Stanier 337) (Ralstonia eutropha).